Reading from the N-terminus, the 186-residue chain is MSKIILKTSRFLLKSPVEEDDFDQITKIKSDPLVSNTQLYGKVESRELCRFMFQHYITDARITKTRRKRWVFGIYPLEVSSTFPSICYIGNVGLSKKNVKSDTANLFFEIGPLYWGMGIATECVGRVIEFGSENNIQNFIIDPIIGNEASKKVALKLGFEDSGTFVTAYNGLQQHIYKLSKQIRTG.

In terms of domain architecture, N-acetyltransferase spans 12–184 (LLKSPVEEDD…HIYKLSKQIR (173 aa)).

It belongs to the acetyltransferase family.

It is found in the cytoplasm. The protein localises to the nucleus. This is an uncharacterized protein from Schizosaccharomyces pombe (strain 972 / ATCC 24843) (Fission yeast).